The chain runs to 153 residues: NADH dehydrogenase [ubiquinone] 1 beta subcomplex subunit 11, mitochondrial (153 aa).

The N-terminal 29 residues, 1 to 29, are a transit peptide targeting the mitochondrion; that stretch reads MAAGLFGLSARRLLAAAATRGLPAARVRW. The segment at 49–72 is disordered; sequence PEPTTQWQEDLDPEDENLYEKNPD. A helical transmembrane segment spans residues 89–109; that stretch reads LVFFFGVSIILVLGSTFVAYL.

It belongs to the complex I NDUFB11 subunit family. As to quaternary structure, complex I is composed of 45 different subunits. Interacts with BCAP31.

It is found in the mitochondrion inner membrane. Functionally, accessory subunit of the mitochondrial membrane respiratory chain NADH dehydrogenase (Complex I), that is believed not to be involved in catalysis. Complex I functions in the transfer of electrons from NADH to the respiratory chain. The immediate electron acceptor for the enzyme is believed to be ubiquinone. The polypeptide is NADH dehydrogenase [ubiquinone] 1 beta subcomplex subunit 11, mitochondrial (NDUFB11) (Pongo pygmaeus (Bornean orangutan)).